A 991-amino-acid polypeptide reads, in one-letter code: MTPSSTKKIKQRRSTSCTVCRTIKRKCDGNTPCSNCLKRNQECIYPDVDKRKKRYSIEYITNLENTNQQLHDQLQSLIDLKDNPYQLHLKITEILESSSSFLDNSETKSDSSLGSPELSKSEASLANSFTLGGELVVSSREQGANFHVHLNQQQQQQQPSPQSLSQSSASEVSTRSSPASPNSTISLAPQILRIPSRPFQQQTRQNLLRQSDLPLHYPISGKTSGPNASNITGSIASTISGSRKSSISVDISPPPSLPVFPTSGPTLPTLLPEPLPRNDFDFAPKFFPAPGGKSNMAFGATTVYDADESMVMNVNQIEERWGTGIKLAKLRNVPNIQNRSSSSSSTLIKVNKRTIEEVIKMITNSKAKKYFALAFKYFDRPILCYLIPRGKVIKLYEEICAHKNDLATVEDILGLYPTNQFISIELIAALIASGALYDDNIDCVREYLTLSKTEMFINNSGCLVFNESSYPKLQAMLVCALLELGLGELTTAWELSGIALRMGIDLGFDSFIYDDSDKEIDNLRNLVFWGSYIIDKYAGLIFGRITMLYVDNSVPLIFLPNRQGKLPCLAQLIIDTQPMISSIYETIPETKNDPEMSKKIFLERYNLLQGYNKSLGAWKRGLSREYFWNKSILINTITDESVDHSLKIAYYLIFLIMNKPFLKLPIGSDIDTFIEIVDEMEIIMRYIPDDKHLLNLVVYYALVLMIQSLVAQVSYTNANNYTQNSKFMNQLLFFIDRMGEVLRVDIWLICKKVHSNFQQKVEYLEKLMLDLTEKMEQRRRDEENLMMQQEEFYAQQQQQQQQQQQQPKHEYHDHQQEQEQQEQLQEEHSEKDIKIEIKDEPQPQEEHIHQDYPMKEEEENLNQLSEPQTNEEDNPAEDMLQNEQFMRMVDILFIRGIENDQEEGEEQQQQQQQQEQVQQEQVQQEQVQQDQMELEEDELPQQMPTSPEQPDEPEIPQLPEILDPTFFNSIVDNNGSTFNNIFSFDTEGFRL.

The segment at residues 17–43 is a DNA-binding region (zn(2)-C6 fungal-type); the sequence is CTVCRTIKRKCDGNTPCSNCLKRNQEC. 3 disordered regions span residues 150-188, 792-875, and 901-959; these read LNQQQQQQQPSPQSLSQSSASEVSTRSSPASPNSTISLA, FYAQ…EDNP, and QEEG…PQLP. Residues 152-168 show a composition bias toward low complexity; that stretch reads QQQQQQQPSPQSLSQSS. Over residues 169-187 the composition is skewed to polar residues; it reads ASEVSTRSSPASPNSTISL. Low complexity predominate over residues 795–806; it reads QQQQQQQQQQQQ. Composition is skewed to basic and acidic residues over residues 807–817 and 825–855; these read PKHEYHDHQQE and QEEHSEKDIKIEIKDEPQPQEEHIHQDYPMK. The segment covering 907 to 931 has biased composition (low complexity); the sequence is QQQQQQQQEQVQQEQVQQEQVQQDQ.

It is found in the nucleus. In terms of biological role, transcription factor that mediates conventional biofilm formation and plays a key role in microcolony formation under both flow and static conditions and to epithelial surfaces. Modulates infection of mammalian hosts. In Candida albicans (strain SC5314 / ATCC MYA-2876) (Yeast), this protein is Transcription factor ROB1.